A 108-amino-acid polypeptide reads, in one-letter code: Large ribosomal subunit protein uL23 (108 aa).

This sequence belongs to the universal ribosomal protein uL23 family. In terms of assembly, part of the 50S ribosomal subunit. Contacts protein L29, and trigger factor when it is bound to the ribosome.

In terms of biological role, one of the early assembly proteins it binds 23S rRNA. One of the proteins that surrounds the polypeptide exit tunnel on the outside of the ribosome. Forms the main docking site for trigger factor binding to the ribosome. The chain is Large ribosomal subunit protein uL23 from Polaromonas sp. (strain JS666 / ATCC BAA-500).